The following is a 723-amino-acid chain: BBSome complex assembly protein BBS10 (723 aa).

This sequence belongs to the TCP-1 chaperonin family. As to quaternary structure, component of a complex composed at least of MKKS, BBS10, BBS12, TCP1, CCT2, CCT3, CCT4, CCT5 and CCT8.

It is found in the cell projection. The protein resides in the cilium. Its function is as follows. Probable molecular chaperone that assists the folding of proteins upon ATP hydrolysis. Plays a role in the assembly of BBSome, a complex involved in ciliogenesis regulating transports vesicles to the cilia. Involved in adipogenic differentiation. The polypeptide is BBSome complex assembly protein BBS10 (BBS10) (Homo sapiens (Human)).